We begin with the raw amino-acid sequence, 403 residues long: Probable tubulin--tyrosine ligase C12B10.04 (403 aa).

In terms of domain architecture, TTL spans 9 to 386 (KVYVNYRDEY…PFFESSTKRN (378 aa)).

The protein belongs to the tubulin--tyrosine ligase family. The cofactor is Mg(2+). K(+) is required as a cofactor.

It localises to the cytoplasm. The protein resides in the nucleus. The enzyme catalyses C-terminal L-alpha-aminoacyl-L-glutamyl-L-glutamyl-[tubulin] + L-tyrosine + ATP = C-terminal L-alpha-aminoacyl-L-glutamyl-L-glutamyl-L-tyrosyl-[tubulin] + ADP + phosphate + H(+). Functionally, probable tubulin--tyrosine ligase. This chain is Probable tubulin--tyrosine ligase C12B10.04, found in Schizosaccharomyces pombe (strain 972 / ATCC 24843) (Fission yeast).